The chain runs to 449 residues: Tubulin alpha chain (449 aa).

Positions 1–4 (MREC) match the MREC motif motif. GTP is bound at residue Gln-11. Lys-40 is modified (N6-acetyllysine). Residues Glu-71, Ser-140, Gly-144, Thr-145, Thr-179, Asn-206, and Asn-228 each contribute to the GTP site. Glu-71 contributes to the Mg(2+) binding site. Glu-254 is an active-site residue. Residues 430–449 (KDYEEVGADSADAEDEGEEY) form a disordered region. Residues 431–449 (DYEEVGADSADAEDEGEEY) show a composition bias toward acidic residues.

It belongs to the tubulin family. As to quaternary structure, dimer of alpha and beta chains. A typical microtubule is a hollow water-filled tube with an outer diameter of 25 nm and an inner diameter of 15 nM. Alpha-beta heterodimers associate head-to-tail to form protofilaments running lengthwise along the microtubule wall with the beta-tubulin subunit facing the microtubule plus end conferring a structural polarity. Microtubules usually have 13 protofilaments but different protofilament numbers can be found in some organisms and specialized cells. It depends on Mg(2+) as a cofactor. Post-translationally, some glutamate residues at the C-terminus are polyglycylated, resulting in polyglycine chains on the gamma-carboxyl group. Glycylation is mainly limited to tubulin incorporated into axonemes (cilia and flagella) whereas glutamylation is prevalent in neuronal cells, centrioles, axonemes, and the mitotic spindle. Both modifications can coexist on the same protein on adjacent residues, and lowering polyglycylation levels increases polyglutamylation, and reciprocally. The precise function of polyglycylation is still unclear. In terms of processing, some glutamate residues at the C-terminus are polyglutamylated, resulting in polyglutamate chains on the gamma-carboxyl group. Polyglutamylation plays a key role in microtubule severing by spastin (SPAST). SPAST preferentially recognizes and acts on microtubules decorated with short polyglutamate tails: severing activity by SPAST increases as the number of glutamates per tubulin rises from one to eight, but decreases beyond this glutamylation threshold. Acetylation of alpha chains at Lys-40 is located inside the microtubule lumen. This modification has been correlated with increased microtubule stability, intracellular transport and ciliary assembly. Post-translationally, undergoes a tyrosination/detyrosination cycle, the cyclic removal and re-addition of a C-terminal tyrosine residue by the enzymes tubulin tyrosine carboxypeptidase (MATCAP1, VASH1 or VASH2) and tubulin tyrosine ligase (TTL), respectively. In terms of processing, tyrosination promotes microtubule interaction with CAP-Gly microtubule plus-end tracking proteins. Tyrosinated tubulins regulate the initiation of dynein-driven motility. Detyrosination is involved in metaphase plate congression by guiding chromosomes during mitosis. Detyrosination increases microtubules-dependent mechanotransduction in dystrophic cardiac and skeletal muscle. In cardiomyocytes, detyrosinated microtubules are required to resist to contractile compression during contraction.

The protein resides in the cytoplasm. It localises to the cytoskeleton. It catalyses the reaction GTP + H2O = GDP + phosphate + H(+). Tubulin is the major constituent of microtubules, a cylinder consisting of laterally associated linear protofilaments composed of alpha- and beta-tubulin heterodimers. Microtubules grow by the addition of GTP-tubulin dimers to the microtubule end, where a stabilizing cap forms. Below the cap, tubulin dimers are in GDP-bound state, owing to GTPase activity of alpha-tubulin. This Xenopus laevis (African clawed frog) protein is Tubulin alpha chain (tuba).